Reading from the N-terminus, the 660-residue chain is Bifunctional polymyxin resistance protein ArnA (660 aa).

The tract at residues 1–304 (MKTVVFAYHD…TLGLVQGSRL (304 aa)) is formyltransferase ArnAFT. 86-88 (HLI) is a binding site for (6R)-10-formyltetrahydrofolate. Residue His-104 is the Proton donor; for formyltransferase activity of the active site. Residues Arg-114 and 136 to 140 (VKRAD) contribute to the (6R)-10-formyltetrahydrofolate site. The interval 314-660 (RRTRVLILGV…RTVDLTDKPS (347 aa)) is dehydrogenase ArnADH. Residues Asp-347 and 368-369 (DI) contribute to the NAD(+) site. UDP-alpha-D-glucuronate is bound by residues Ala-393, Tyr-398, and 432 to 433 (TS). The active-site Proton acceptor; for decarboxylase activity is Glu-434. UDP-alpha-D-glucuronate-binding positions include Arg-460, Asn-492, 526-535 (KLIDGGKQKR), and Tyr-613. Arg-619 functions as the Proton donor; for decarboxylase activity in the catalytic mechanism.

This sequence in the N-terminal section; belongs to the Fmt family. UDP-L-Ara4N formyltransferase subfamily. The protein in the C-terminal section; belongs to the NAD(P)-dependent epimerase/dehydratase family. UDP-glucuronic acid decarboxylase subfamily. In terms of assembly, homohexamer, formed by a dimer of trimers.

It carries out the reaction UDP-alpha-D-glucuronate + NAD(+) = UDP-beta-L-threo-pentopyranos-4-ulose + CO2 + NADH. It catalyses the reaction UDP-4-amino-4-deoxy-beta-L-arabinose + (6R)-10-formyltetrahydrofolate = UDP-4-deoxy-4-formamido-beta-L-arabinose + (6S)-5,6,7,8-tetrahydrofolate + H(+). Its pathway is nucleotide-sugar biosynthesis; UDP-4-deoxy-4-formamido-beta-L-arabinose biosynthesis; UDP-4-deoxy-4-formamido-beta-L-arabinose from UDP-alpha-D-glucuronate: step 1/3. It participates in nucleotide-sugar biosynthesis; UDP-4-deoxy-4-formamido-beta-L-arabinose biosynthesis; UDP-4-deoxy-4-formamido-beta-L-arabinose from UDP-alpha-D-glucuronate: step 3/3. It functions in the pathway bacterial outer membrane biogenesis; lipopolysaccharide biosynthesis. Bifunctional enzyme that catalyzes the oxidative decarboxylation of UDP-glucuronic acid (UDP-GlcUA) to UDP-4-keto-arabinose (UDP-Ara4O) and the addition of a formyl group to UDP-4-amino-4-deoxy-L-arabinose (UDP-L-Ara4N) to form UDP-L-4-formamido-arabinose (UDP-L-Ara4FN). The modified arabinose is attached to lipid A and is required for resistance to polymyxin and cationic antimicrobial peptides. The sequence is that of Bifunctional polymyxin resistance protein ArnA from Escherichia coli (strain K12 / MC4100 / BW2952).